A 185-amino-acid chain; its full sequence is Uroplakin-2 (185 aa).

The signal sequence occupies residues 1–26; that stretch reads MASPWPVWTLSWILILLAVLVPGAAA. Residues 27–85 constitute a propeptide that is removed on maturation; it reads DFNISSLSGLLSPVMTESLLVALPPCHLTGGNATLTVRRANDSKVVRSSFVVPPCRGRR. N-linked (GlcNAc...) asparagine glycans are attached at residues asparagine 29, asparagine 58, and asparagine 67. The Lumenal portion of the chain corresponds to 86 to 156; that stretch reads ELVSVVDSGS…IGLAMARTGG (71 aa). The chain crosses the membrane as a helical span at residues 157–177; it reads MVVITVLLSVAMFLLVLGLII. At 178–185 the chain is on the cytoplasmic side; sequence ALALGARK.

It belongs to the uroplakin-2 family. Interacts with uroplakin-1a (UPK1A). As to expression, bladder epithelium.

The protein localises to the cell membrane. Functionally, component of the asymmetric unit membrane (AUM); a highly specialized biomembrane elaborated by terminally differentiated urothelial cells. May play an important role in regulating the assembly of the AUM. The chain is Uroplakin-2 (UPK2) from Bos taurus (Bovine).